A 662-amino-acid polypeptide reads, in one-letter code: DNA ligase (662 aa).

NAD(+) contacts are provided by residues Asp-34–Asp-38, Ser-83–Ile-84, and Glu-113. Residue Lys-115 is the N6-AMP-lysine intermediate of the active site. Residues Arg-136, Glu-172, Lys-286, and Lys-310 each coordinate NAD(+). Positions 404, 407, 422, and 427 each coordinate Zn(2+). The BRCT domain maps to Arg-583–Asn-662.

The protein belongs to the NAD-dependent DNA ligase family. LigA subfamily. Mg(2+) is required as a cofactor. Requires Mn(2+) as cofactor.

The catalysed reaction is NAD(+) + (deoxyribonucleotide)n-3'-hydroxyl + 5'-phospho-(deoxyribonucleotide)m = (deoxyribonucleotide)n+m + AMP + beta-nicotinamide D-nucleotide.. DNA ligase that catalyzes the formation of phosphodiester linkages between 5'-phosphoryl and 3'-hydroxyl groups in double-stranded DNA using NAD as a coenzyme and as the energy source for the reaction. It is essential for DNA replication and repair of damaged DNA. This Chlamydia felis (strain Fe/C-56) (Chlamydophila felis) protein is DNA ligase.